The chain runs to 547 residues: Signal recognition particle receptor subunit alpha homolog (547 aa).

Residues Leu-124–Trp-174 form a disordered region. The segment covering Ser-142–Lys-153 has biased composition (basic and acidic residues). The segment at Tyr-343–Met-546 is NG domain. GTP is bound by residues Gly-349 to Ser-356, Asp-437 to Arg-441, and Ser-498 to Asp-501.

It belongs to the GTP-binding SRP family. As to quaternary structure, heterodimer of an alpha and a beta chain.

Its subcellular location is the endoplasmic reticulum membrane. Functionally, component of the SRP (signal recognition particle) receptor (SR). Ensures, in conjunction with the signal recognition particle, the correct targeting of the nascent secretory proteins to the endoplasmic reticulum membrane system. GTP hydrolysis may enhance the fidelity of and provide unidirectionality to the targeting reaction. This is Signal recognition particle receptor subunit alpha homolog (srp101) from Schizosaccharomyces pombe (strain 972 / ATCC 24843) (Fission yeast).